Reading from the N-terminus, the 101-residue chain is Small ribosomal subunit protein uS14 (101 aa).

It belongs to the universal ribosomal protein uS14 family. Part of the 30S ribosomal subunit. Contacts proteins S3 and S10.

In terms of biological role, binds 16S rRNA, required for the assembly of 30S particles and may also be responsible for determining the conformation of the 16S rRNA at the A site. This is Small ribosomal subunit protein uS14 from Rhizobium etli (strain CIAT 652).